A 146-amino-acid chain; its full sequence is Hemoglobin subunit beta (146 aa).

Val1 bears the N-acetylvaline mark. Residues 2–146 enclose the Globin domain; that stretch reads HLTNEEKTAV…VATALAHKYH (145 aa). The residue at position 44 (Ser44) is a Phosphoserine. Residue Lys59 is modified to N6-acetyllysine. Residue His63 participates in heme b binding. Residue Lys82 is modified to N6-acetyllysine. His92 contributes to the heme b binding site. Position 93 is an S-nitrosocysteine (Cys93). Position 144 is an N6-acetyllysine (Lys144).

Belongs to the globin family. Heterotetramer of two alpha chains and two beta chains. As to expression, red blood cells.

Functionally, involved in oxygen transport from the lung to the various peripheral tissues. This Lyroderma lyra (Greater Asian false-vampire bat) protein is Hemoglobin subunit beta (HBB).